The chain runs to 371 residues: Neuropeptide Y receptor type 6 (371 aa).

The Extracellular segment spans residues 1–31; sequence MEVLTNQPTPNKTSGKSNNSAFFYFESCQPP. Asparagine 11 and asparagine 18 each carry an N-linked (GlcNAc...) asparagine glycan. A helical membrane pass occupies residues 32-52; it reads FLAILLLLIAYTVILIMGIFG. The Cytoplasmic portion of the chain corresponds to 53 to 82; it reads NLSLIIIIFKKQREAQNVTNILIANLSLSD. Residues 83–103 traverse the membrane as a helical segment; it reads ILVCVMCIPFTVIYTLMDHWV. Over 104–111 the chain is Extracellular; the sequence is FGNTMCKL. An intrachain disulfide couples cysteine 109 to cysteine 196. A helical membrane pass occupies residues 112–132; sequence TSYVQSVSVSVSIFSLVLIAI. Topologically, residues 133–150 are cytoplasmic; that stretch reads ERYQLIVNPRGWKPRVAH. Residues 151 to 171 traverse the membrane as a helical segment; that stretch reads AYWGIILIWLISLTLSIPLFL. Residues 172 to 206 lie on the Extracellular side of the membrane; sequence SYHLTNEPFHNLSLPTDIYTHQVACVEIWPSKLNQ. Asparagine 182 carries N-linked (GlcNAc...) asparagine glycosylation. A helical transmembrane segment spans residues 207–227; sequence LLFSTSLFMLQYFVPLGFILI. Over 228–263 the chain is Cytoplasmic; it reads CYLKIVLCLRKRTRQVDRRKENKSRLNENKRVNVML. Residues 264 to 284 form a helical membrane-spanning segment; it reads ISIVVTFGACWLPLNIFNVIF. Residues 285–297 are Extracellular-facing; the sequence is DWYHEMLMSCHHD. The helical transmembrane segment at 298–318 threads the bilayer; the sequence is LVFVVCHLIAMVSTCINPLFY. Over 319–371 the chain is Cytoplasmic; sequence GFLNKNFQKDLMMLIHHCWCGEPQESYENIAMSTMHTDESKGSLKLAHIPTGI. Cysteine 336 carries S-palmitoyl cysteine lipidation.

This sequence belongs to the G-protein coupled receptor 1 family. Kidney and discrete regions of the hypothalamus including the suprachiasmatic nucleus, anterior hypothalamus, bed nucleus stria terminalis, and the ventromedial nucleus.

It is found in the cell membrane. Functionally, receptor for neuropeptide Y and peptide YY. The rank order of affinity of this receptor for pancreatic polypeptides is NPY = PYY &gt;= NPY (2-36) = [Leu-31, Pro-34] NPY &gt; NPY (13-36) &gt; PP. The activity of this receptor is mediated by G proteins that inhibits adenylate cyclase activity. In Mus musculus (Mouse), this protein is Neuropeptide Y receptor type 6 (Npy6r).